The sequence spans 312 residues: Bifunctional pinoresinol-lariciresinol reductase 1 (312 aa).

NADP(+) contacts are provided by residues 10-16 (GGTGYIG), arginine 35, and lysine 44. Catalysis depends on lysine 136, which acts as the Proton acceptor. Position 140 (arginine 140) interacts with NADP(+). Histidine 268 contacts substrate.

This sequence belongs to the NmrA-type oxidoreductase family. Isoflavone reductase subfamily. As to quaternary structure, dimer. Expressed in seeds and roots, but not in stems. Detected in leaves.

It catalyses the reaction (-)-lariciresinol + NADP(+) = (-)-pinoresinol + NADPH + H(+). It carries out the reaction (+)-secoisolariciresinol + NADP(+) = (-)-lariciresinol + NADPH + H(+). Functionally, reductase involved in lignan biosynthesis. Catalyzes the enantioselective conversion of (-)-pinoresinol into (-)-lariciresinol and of (-)-lariciresinol into (+)-secoisolariciresinol. Abstracts the 4R-hydride from the NADPH cofactor during catalysis. This is Bifunctional pinoresinol-lariciresinol reductase 1 (PLR_Lu1) from Linum usitatissimum (Flax).